A 321-amino-acid polypeptide reads, in one-letter code: Sialic acid-binding periplasmic protein SiaP (321 aa).

A signal peptide spans M1–A22.

This sequence belongs to the bacterial solute-binding protein 7 family. The complex comprises the extracytoplasmic solute receptor protein SiaP, and the two transmembrane proteins SiaQ and SiaM.

It is found in the periplasm. Functionally, part of the tripartite ATP-independent periplasmic (TRAP) transport system SiaPQM that catalyzes unidirectional Na(+)-dependent sialic acid uptake. Binds the common sialic acid N-acetylneuraminic acid (Neu5Ac) with a high affinity. The protein is Sialic acid-binding periplasmic protein SiaP of Vibrio cholerae serotype O1 (strain ATCC 39315 / El Tor Inaba N16961).